The chain runs to 245 residues: 14-3-3 protein theta (245 aa).

This sequence belongs to the 14-3-3 family. Homodimer, and heterodimer with other family members.

It is found in the cytoplasm. Its function is as follows. Adapter protein implicated in the regulation of a large spectrum of both general and specialized signaling pathways. Binds to a large number of partners, usually by recognition of a phosphoserine or phosphothreonine motif. Binding generally results in the modulation of the activity of the binding partner. This chain is 14-3-3 protein theta (YWHAQ), found in Gallus gallus (Chicken).